The primary structure comprises 499 residues: MQDQYILALDQGTTSSRAMLFDRLGNIVSTAQKEFQQIYPRPGWVEHDPQEIWSTQAGVAAEAVTRAGMNGTSIAAIGITNQRETTIVWDRETGHPIYNAIVWQDRRTADFCDQLKEQGLEEKVRAKTGLPIDSYFSATKIRWILDNVEGAREKAKQGRLAFGTVDSWLVWNFTKGGLHITDVTNASRTMLFNIHSLKWDDELLEALDIPRSMLPEVRASSETYGPTKTTVFASKIPLAGIAGDQHAALFGQMCTESGMVKNTYGTGCFLVMNTGDKPIESKNNLVTTIAWQIGDQINYALEGSIFIGGAVVQWLRDGLGIIRNAAEIETLARSVPHCDGVYLVPAFAGLGAPHWNARARGTLFGVTRGTSSAHIARAALDSIAYQSVDVLKAMEADSGIRIGELRVDGGACANNLLMQFQADILGVDAVRPKVSETTALGAAYLAGLAVGYWKDVDELQSQWKLDRRFTPALPHAEVKACLDGWKRAIRAAKAWADTP.

Position 13 (Thr-13) interacts with ADP. 3 residues coordinate ATP: Thr-13, Thr-14, and Ser-15. Thr-13 contacts sn-glycerol 3-phosphate. Position 17 (Arg-17) interacts with ADP. Sn-glycerol 3-phosphate contacts are provided by Arg-83, Glu-84, Tyr-135, and Asp-244. Glycerol is bound by residues Arg-83, Glu-84, Tyr-135, Asp-244, and Gln-245. ADP-binding residues include Thr-266 and Gly-309. ATP-binding residues include Thr-266, Gly-309, Gln-313, and Gly-410. ADP contacts are provided by Gly-410 and Asn-414.

The protein belongs to the FGGY kinase family.

The enzyme catalyses glycerol + ATP = sn-glycerol 3-phosphate + ADP + H(+). Its pathway is polyol metabolism; glycerol degradation via glycerol kinase pathway; sn-glycerol 3-phosphate from glycerol: step 1/1. Inhibited by fructose 1,6-bisphosphate (FBP). In terms of biological role, key enzyme in the regulation of glycerol uptake and metabolism. Catalyzes the phosphorylation of glycerol to yield sn-glycerol 3-phosphate. The protein is Glycerol kinase of Paraburkholderia xenovorans (strain LB400).